The primary structure comprises 186 residues: Lipid A palmitoyltransferase PagP (186 aa).

The N-terminal stretch at 1–25 is a signal peptide; that stretch reads MNVSKYVAIFSFVFIQLISVGKVFA. Active-site residues include His58, Asp101, and Ser102.

Belongs to the lipid A palmitoyltransferase family. In terms of assembly, homodimer.

It is found in the cell outer membrane. The enzyme catalyses lipid A (E. coli) + a 1-hexadecanoyl-2-acyl-sn-glycero-3-phosphocholine = hepta-acyl lipid A (E. coli) + a 2-acyl-sn-glycero-3-phosphocholine. It catalyses the reaction lipid IIA + a 1-hexadecanoyl-2-acyl-sn-glycero-3-phosphocholine = lipid IIB + a 2-acyl-sn-glycero-3-phosphocholine. The catalysed reaction is lipid IVA (E. coli) + a 1-hexadecanoyl-2-acyl-sn-glycero-3-phosphocholine = lipid IVB (E. coli) + a 2-acyl-sn-glycero-3-phosphocholine. In terms of biological role, transfers a palmitate residue from the sn-1 position of a phospholipid to the N-linked hydroxymyristate on the proximal unit of lipid A or its precursors. The protein is Lipid A palmitoyltransferase PagP of Escherichia coli O157:H7.